The primary structure comprises 499 residues: Lysine--tRNA ligase (499 aa).

Residues Glu-408 and Glu-415 each coordinate Mg(2+).

It belongs to the class-II aminoacyl-tRNA synthetase family. Homodimer. Mg(2+) serves as cofactor.

The protein resides in the cytoplasm. The catalysed reaction is tRNA(Lys) + L-lysine + ATP = L-lysyl-tRNA(Lys) + AMP + diphosphate. The polypeptide is Lysine--tRNA ligase (Bacillus mycoides (strain KBAB4) (Bacillus weihenstephanensis)).